The chain runs to 192 residues: uncharacterized protein (192 aa).

A Nudix hydrolase domain is found at 29 to 160; that stretch reads HRQAAVLIPI…PLDIYRRGDS (132 aa). The Nudix box signature appears at 67 to 89; the sequence is GAVDDTDASVIAAALREAEEEVA. Glu83 and Glu87 together coordinate Mg(2+).

Belongs to the Nudix hydrolase family. PCD1 subfamily. The cofactor is Mn(2+). Mg(2+) is required as a cofactor.

Its function is as follows. Probably mediates the hydrolysis of some nucleoside diphosphate derivatives. This is an uncharacterized protein from Escherichia coli (strain SE11).